Reading from the N-terminus, the 71-residue chain is Peptide Ctri9819 (71 aa).

A signal peptide spans 1 to 23; it reads MKTVSTVAILAIFLLIVITTIET. Leu-34 is modified (leucine amide). A propeptide spanning residues 38 to 71 is cleaved from the precursor; that stretch reads SKLETFKRIARTLSAGISAKRSLEDVNSLTGMSS.

This sequence belongs to the non-disulfide-bridged peptide (NDBP) superfamily. Short antimicrobial peptide (group 4) family. In terms of tissue distribution, expressed by the venom gland.

The protein localises to the secreted. Antimicrobial peptide. This is Peptide Ctri9819 from Chaerilus tricostatus (Scorpion).